A 94-amino-acid polypeptide reads, in one-letter code: Integration host factor subunit beta (94 aa).

It belongs to the bacterial histone-like protein family. As to quaternary structure, heterodimer of an alpha and a beta chain.

Functionally, this protein is one of the two subunits of integration host factor, a specific DNA-binding protein that functions in genetic recombination as well as in transcriptional and translational control. This is Integration host factor subunit beta from Escherichia coli O127:H6 (strain E2348/69 / EPEC).